The chain runs to 318 residues: Ubiquinol oxidase (318 aa).

The helical transmembrane segment at 150 to 170 (VVVLETVAAIPGMVGGMFRHL) threads the bilayer. Glutamate 154, glutamate 193, and histidine 196 together coordinate Fe cation. A helical membrane pass occupies residues 212–232 (MLIKLGQFLFFNGYMVFYFVA). Fe cation-binding residues include glutamate 244, glutamate 295, and histidine 298.

This sequence belongs to the alternative oxidase family. Found as monomers and homodimers. Fe cation serves as cofactor.

The protein localises to the mitosome membrane. It catalyses the reaction 2 a ubiquinol + O2 = 2 a ubiquinone + 2 H2O. In terms of biological role, alternative oxidase which function may be to reoxidize reducing equivalents produced by glycolysis such as ubiquinol. In Trachipleistophora hominis (Microsporidian parasite), this protein is Ubiquinol oxidase (AOX).